The sequence spans 264 residues: 3-methyl-2-oxobutanoate hydroxymethyltransferase (264 aa).

Mg(2+) contacts are provided by D45 and D84. 3-methyl-2-oxobutanoate is bound by residues 45–46 (DS), D84, and K112. Residue E114 coordinates Mg(2+). E181 (proton acceptor) is an active-site residue.

This sequence belongs to the PanB family. In terms of assembly, homodecamer; pentamer of dimers. Mg(2+) serves as cofactor.

It localises to the cytoplasm. It catalyses the reaction 3-methyl-2-oxobutanoate + (6R)-5,10-methylene-5,6,7,8-tetrahydrofolate + H2O = 2-dehydropantoate + (6S)-5,6,7,8-tetrahydrofolate. Its pathway is cofactor biosynthesis; (R)-pantothenate biosynthesis; (R)-pantoate from 3-methyl-2-oxobutanoate: step 1/2. Its function is as follows. Catalyzes the reversible reaction in which hydroxymethyl group from 5,10-methylenetetrahydrofolate is transferred onto alpha-ketoisovalerate to form ketopantoate. In Vibrio atlanticus (strain LGP32) (Vibrio splendidus (strain Mel32)), this protein is 3-methyl-2-oxobutanoate hydroxymethyltransferase.